Reading from the N-terminus, the 249-residue chain is 5'-nucleotidase SurE (249 aa).

A divalent metal cation-binding residues include Asp8, Asp9, Ser39, and Asn96.

It belongs to the SurE nucleotidase family. The cofactor is a divalent metal cation.

The protein localises to the cytoplasm. It catalyses the reaction a ribonucleoside 5'-phosphate + H2O = a ribonucleoside + phosphate. Its function is as follows. Nucleotidase that shows phosphatase activity on nucleoside 5'-monophosphates. The protein is 5'-nucleotidase SurE of Clostridium tetani (strain Massachusetts / E88).